A 317-amino-acid chain; its full sequence is Zinc finger protein 771 (317 aa).

K33 is covalently cross-linked (Glycyl lysine isopeptide (Lys-Gly) (interchain with G-Cter in SUMO2)). 8 C2H2-type zinc fingers span residues 63 to 85, 91 to 113, 119 to 141, 147 to 169, 175 to 197, 203 to 225, 231 to 253, and 259 to 281; these read HACP…ARTH, FACT…GRTH, YQCP…RRRH, YACA…LRVH, YACP…RRTH, YACA…RRVH, HRCA…ARTH, and YPCT…RRAH.

Belongs to the krueppel C2H2-type zinc-finger protein family.

The protein localises to the nucleus. Its function is as follows. May be involved in transcriptional regulation. The sequence is that of Zinc finger protein 771 (Znf771) from Mus musculus (Mouse).